The following is a 265-amino-acid chain: Lysosomal membrane ascorbate-dependent ferrireductase CYB561A3 (265 aa).

The Cytoplasmic portion of the chain corresponds to 1–2 (MA). Residues 3–23 (VGWFYLSVLALCSLGSMCILF) form a helical membrane-spanning segment. In terms of domain architecture, Cytochrome b561 spans 12 to 219 (ALCSLGSMCI…FGLLVLYILL (208 aa)). Residues 24–45 (TIYWMRYWHGGFAWDGSMLMFN) lie on the Lumenal side of the membrane. The chain crosses the membrane as a helical span at residues 46 to 66 (WHPVLMVTGMVVLYSAASLVY). Heme b is bound by residues histidine 47 and arginine 67. Topologically, residues 67 to 83 (RLPQSWVGPRLPWKSGH) are cytoplasmic. Residues arginine 76 and lysine 80 each coordinate L-ascorbate. Heme b is bound at residue histidine 83. A helical membrane pass occupies residues 84–104 (AAMHLLAFLLTVLGLHAVFEF). Residues 105-119 (HNHAKIPHLYSLHSW) lie on the Lumenal side of the membrane. Heme b contacts are provided by residues 112–115 (HLYS) and histidine 117. The chain crosses the membrane as a helical span at residues 120–140 (LGITTVFLFACQWFLGFSVFL). The Cytoplasmic portion of the chain corresponds to 141–154 (LPWASMWLRSLLKP). Position 149 (arginine 149) interacts with L-ascorbate. The chain crosses the membrane as a helical span at residues 155–175 (IHVFFGASILSLAIASVVSGI). Heme b-binding residues include histidine 156 and glutamate 177. Residues 176–197 (NEKLFFSLKNGTKTYSNLPSEA) lie on the Lumenal side of the membrane. N-linked (GlcNAc...) asparagine glycosylation is present at asparagine 185. Residues 198 to 218 (VFANCAGMLVVVFGLLVLYIL) traverse the membrane as a helical segment. Residues 219-265 (LASSWKRPEPGMQAEREPTRTRGRAGTPEVMLEGERGLAEPLLQKRS) are Cytoplasmic-facing. A heme b-binding site is contributed by lysine 224. Basic and acidic residues predominate over residues 228 to 238 (PGMQAEREPTR). Positions 228-265 (PGMQAEREPTRTRGRAGTPEVMLEGERGLAEPLLQKRS) are disordered.

As to quaternary structure, homodimer. Heme b serves as cofactor. Post-translationally, N-glycosylated.

The protein resides in the late endosome membrane. It localises to the lysosome membrane. The enzyme catalyses Fe(3+)(out) + L-ascorbate(in) = monodehydro-L-ascorbate radical(in) + Fe(2+)(out) + H(+). Its function is as follows. Transmembrane reductase that uses ascorbate as an electron donor in the cytoplasm and transfers electrons across membranes to reduce iron cations Fe(3+) into Fe(2+) in the lumen of the late endosome and lysosome. Reduced iron can then be extruded from the late endosome and lysosome to the cytoplasm by divalent metal-specific transporters. It is therefore most probably involved in endosomal and lysosomal cellular iron homeostasis. In Bos taurus (Bovine), this protein is Lysosomal membrane ascorbate-dependent ferrireductase CYB561A3.